The chain runs to 463 residues: Cysteine--tRNA ligase (463 aa).

Cys-33 lines the Zn(2+) pocket. Residues 35-45 carry the 'HIGH' region motif; that stretch reads PTVYDFAHIGN. Residues Cys-221, His-246, and Glu-250 each contribute to the Zn(2+) site. The 'KMSKS' region signature appears at 279–283; it reads KMSKS. Residue Lys-282 coordinates ATP.

Belongs to the class-I aminoacyl-tRNA synthetase family. In terms of assembly, monomer. Zn(2+) is required as a cofactor.

The protein localises to the cytoplasm. The enzyme catalyses tRNA(Cys) + L-cysteine + ATP = L-cysteinyl-tRNA(Cys) + AMP + diphosphate. The chain is Cysteine--tRNA ligase from Rhizobium johnstonii (strain DSM 114642 / LMG 32736 / 3841) (Rhizobium leguminosarum bv. viciae).